We begin with the raw amino-acid sequence, 1226 residues long: Chromosome partition protein Smc (1226 aa).

Residue 32–39 (PNGCGKSN) coordinates ATP. 2 coiled-coil regions span residues 173-231 (ITKF…IKRN) and 269-491 (NSLE…SKSL). An SMC hinge domain is found at 527–635 (YQLLGNLIQC…FDGYFIASKF (109 aa)). Coiled-coil stretches lie at residues 679–741 (QGVV…AAKK), 775–965 (MLES…LREA), and 1006–1078 (HRRY…KSKE).

It belongs to the SMC family. As to quaternary structure, homodimer.

The protein localises to the cytoplasm. Functionally, required for chromosome condensation and partitioning. The polypeptide is Chromosome partition protein Smc (Halobacteriovorax marinus (strain ATCC BAA-682 / DSM 15412 / SJ) (Bacteriovorax marinus)).